We begin with the raw amino-acid sequence, 570 residues long: MFS-type transporter ptmT (570 aa).

Positions 1 to 11 (MPDSGNIQLDT) are enriched in polar residues. The interval 1–34 (MPDSGNIQLDTLQHKDHSQETTSHYEGGSQLPEQ) is disordered. A run of 14 helical transmembrane segments spans residues 50-70 (GLIR…CVGL), 94-114 (WYVS…GKIY), 121-141 (WTYL…AITP), 151-171 (AISG…LSNI), 182-202 (AFIG…GGVF), 210-230 (WCFY…FLFM), 247-267 (GLDW…LLAL), 278-298 (NVRI…WLLI), 323-343 (IYTI…PIWF), 356-376 (IMNL…SVLI), 379-399 (VGYM…GAGL), 413-433 (IGYQ…PLLV), 445-465 (VATA…SAIA), and 517-537 (VTHT…GAFI). N-linked (GlcNAc...) asparagine glycosylation is present at Asn-541. Residues 550-570 (PEPLVPGGSHSGAERDSKNGT) are disordered. The segment covering 561–570 (GAERDSKNGT) has biased composition (basic and acidic residues).

The protein belongs to the major facilitator superfamily. TCR/Tet family.

The protein localises to the cell membrane. In terms of biological role, MFS-type transporter; part of the gene cluster that mediates the biosynthesis of the indole diterpenes penitrems. May be involved in the efflux of penitrems. This Penicillium ochrochloron protein is MFS-type transporter ptmT.